The following is a 221-amino-acid chain: MRTYWNVSLDRSNGKRFERLVHYICVPIISIHHAEDTISMTRKEVGHLAETIANHIILDINGTYRTFSVNDIVHCSLEKVITLEGDVTNEFIDRLQILVNKEVQGSQSTQQSLSSVFESTLEKYNSPDDFADYLEETEEEVDYEDYSLDDTIDAISYALKTQEPVQAEWCLLMVDVYTGTLTEVTVETDKDKTLDSILGKYLENGFECVSKKRLGEVLRSA.

This is Putative gene 53 protein (53) from Bacillus phage SP01 (Bacteriophage SP01).